We begin with the raw amino-acid sequence, 395 residues long: DNA primase small subunit PriS (395 aa).

Residues aspartate 95, aspartate 97, and aspartate 302 contribute to the active site.

Belongs to the eukaryotic-type primase small subunit family. As to quaternary structure, heterodimer of a small subunit (PriS) and a large subunit (PriL). Requires Mg(2+) as cofactor. It depends on Mn(2+) as a cofactor.

In terms of biological role, catalytic subunit of DNA primase, an RNA polymerase that catalyzes the synthesis of short RNA molecules used as primers for DNA polymerase during DNA replication. The small subunit contains the primase catalytic core and has DNA synthesis activity on its own. Binding to the large subunit stabilizes and modulates the activity, increasing the rate of DNA synthesis while decreasing the length of the DNA fragments, and conferring RNA synthesis capability. The DNA polymerase activity may enable DNA primase to also catalyze primer extension after primer synthesis. May also play a role in DNA repair. The polypeptide is DNA primase small subunit PriS (Methanothrix thermoacetophila (strain DSM 6194 / JCM 14653 / NBRC 101360 / PT) (Methanosaeta thermophila)).